The following is a 256-amino-acid chain: uncharacterized protein (256 aa).

Residues 187 to 223 (MEEEEISEVEDALNVLQRLCAQEEGDNKEAETNNNNY) are a coiled coil.

This is an uncharacterized protein from Ostreid herpesvirus 1 (isolate France) (OsHV-1).